The chain runs to 219 residues: Protein VERNALIZATION 2 (219 aa).

The CCT domain maps to 138–180 (REAKVMRYREKKKRRRYEKQIRYESRKAYAEMRPRVKGRFAKV).

As to expression, mainly expressed in leaves, and at low levels in the shoot apical meristem (SAM).

Its subcellular location is the nucleus. In terms of biological role, involved in the regulation of vernalization; this process in essential for flowering in cv. Bd29-1 but seems do not occur in cv. Bd21. The sequence is that of Protein VERNALIZATION 2 from Brachypodium distachyon (Purple false brome).